The primary structure comprises 394 residues: 1-deoxy-D-xylulose 5-phosphate reductoisomerase (394 aa).

Thr-13, Gly-14, Thr-15, Ile-16, and Asn-125 together coordinate NADPH. Position 126 (Lys-126) interacts with 1-deoxy-D-xylulose 5-phosphate. Glu-127 lines the NADPH pocket. Asp-151 is a binding site for Mn(2+). 1-deoxy-D-xylulose 5-phosphate is bound by residues Ser-152, Glu-153, Ser-182, and His-205. Glu-153 provides a ligand contact to Mn(2+). Gly-211 is an NADPH binding site. Ser-218, Asn-223, Lys-224, and Glu-227 together coordinate 1-deoxy-D-xylulose 5-phosphate. Glu-227 provides a ligand contact to Mn(2+).

It belongs to the DXR family. Requires Mg(2+) as cofactor. Mn(2+) is required as a cofactor.

The enzyme catalyses 2-C-methyl-D-erythritol 4-phosphate + NADP(+) = 1-deoxy-D-xylulose 5-phosphate + NADPH + H(+). Its pathway is isoprenoid biosynthesis; isopentenyl diphosphate biosynthesis via DXP pathway; isopentenyl diphosphate from 1-deoxy-D-xylulose 5-phosphate: step 1/6. In terms of biological role, catalyzes the NADPH-dependent rearrangement and reduction of 1-deoxy-D-xylulose-5-phosphate (DXP) to 2-C-methyl-D-erythritol 4-phosphate (MEP). This is 1-deoxy-D-xylulose 5-phosphate reductoisomerase from Methylobacillus flagellatus (strain ATCC 51484 / DSM 6875 / VKM B-1610 / KT).